The chain runs to 300 residues: Histone deacetylase HDT3 (300 aa).

Acidic residues predominate over residues 98 to 112; the sequence is EDEMDLDSEDEDEEL. A disordered region spans residues 98-300; it reads EDEMDLDSED…AHSKAKHGGK (203 aa). The span at 119–132 shows a compositional bias: basic and acidic residues; that stretch reads ENGKADEKKQKSQE. Acidic residues predominate over residues 151–197; it reads DDDSDEDETDDSDEDETDDSDEGLSPEEGDDDSSDEDDTSDDEEEDT. A compositionally biased stretch (basic and acidic residues) spans 198–211; sequence PTPKKPEVGKKRAA. Over residues 265-275 the composition is skewed to low complexity; that stretch reads SPKSAPKSGVP. The C2H2-type zinc-finger motif lies at 274-297; sequence VPCKSCSKSFISETAPQAHSKAKH. The segment covering 279-290 has biased composition (polar residues); sequence CSKSFISETAPQ.

This sequence belongs to the histone deacetylase HD2 family. In terms of assembly, multimer. Possibly forms a homotrimer with HDT1 and/or HDT2.

The protein localises to the nucleus. It localises to the nucleolus. Its function is as follows. Mediates the deacetylation of lysine residues on the N-terminal part of the core histones (H2A, H2B, H3 and H4). Histone deacetylation gives a tag for epigenetic repression and plays an important role in transcriptional regulation, cell cycle progression and developmental events. The sequence is that of Histone deacetylase HDT3 (HDT3) from Zea mays (Maize).